Consider the following 1387-residue polypeptide: DNA-directed RNA polymerase subunit beta' (1387 aa).

Zn(2+) is bound by residues Cys70, Cys72, Cys85, and Cys88. Mg(2+) contacts are provided by Asp461, Asp463, and Asp465. Zn(2+)-binding residues include Cys808, Cys882, Cys889, and Cys892. The interval 1367-1387 (QDEAKGVGQETPRLSGQEAAE) is disordered.

The protein belongs to the RNA polymerase beta' chain family. In terms of assembly, the RNAP catalytic core consists of 2 alpha, 1 beta, 1 beta' and 1 omega subunit. When a sigma factor is associated with the core the holoenzyme is formed, which can initiate transcription. Requires Mg(2+) as cofactor. It depends on Zn(2+) as a cofactor.

The catalysed reaction is RNA(n) + a ribonucleoside 5'-triphosphate = RNA(n+1) + diphosphate. In terms of biological role, DNA-dependent RNA polymerase catalyzes the transcription of DNA into RNA using the four ribonucleoside triphosphates as substrates. In Granulibacter bethesdensis (strain ATCC BAA-1260 / CGDNIH1), this protein is DNA-directed RNA polymerase subunit beta'.